The primary structure comprises 783 residues: uncharacterized protein (783 aa).

Residues 1–22 form a disordered region; sequence MVNTRGYTTLPNVEEPANNSQD. The Cytoplasmic segment spans residues 1–109; it reads MVNTRGYTTL…SKIGNVMVMR (109 aa). The helical; Signal-anchor for type II membrane protein transmembrane segment at 110-127 threads the bilayer; that stretch reads RIFYIMMMSIIAALIIAS. The Extracellular segment spans residues 128–783; it reads DRLPNGKARG…NLHGINTNEF (656 aa). Residues Asn-139 and Asn-213 are each glycosylated (N-linked (GlcNAc...) asparagine). The region spanning 241–333 is the PA domain; sequence HNGQLNNIPV…GTGDALTPEW (93 aa). The N-linked (GlcNAc...) asparagine glycan is linked to Asn-529.

It localises to the cell membrane. This is an uncharacterized protein from Saccharomyces cerevisiae (strain ATCC 204508 / S288c) (Baker's yeast).